Consider the following 2462-residue polypeptide: Piezo-type mechanosensitive ion channel homolog (2462 aa).

The next 19 membrane-spanning stretches (helical) occupy residues 5-25 (LVGFLLPSLLLAAALINWSVI), 27-47 (FLDLIAFLLVHYIAPEIGYRF), 57-77 (IFIFSFAVFLAQVVYLVIWAA), 105-125 (TVMYFLALQLLTSLVALADIY), 163-183 (AVQLAVGICNPSWVSLPFFIG), 207-227 (LYIYAGFNIVLLYLYQLPINF), 248-268 (EGPDICSGLFLVLFYIMLSYV), 325-345 (FFTYGFPVSLFALSFWSFHFA), 347-367 (LCAFGLLAYVGYIIYAFPSLF), 374-394 (GLLLVFILLWAVSTYIFNVAF), 404-424 (FGLGMLVALGNLVNNSVFLYL), 467-487 (LIFLIAMKPGFFHAVYVIFFL), 502-522 (SLILLCEVHFALLYILEIDLV), 554-574 (IALLACFCAIHNHGFEVLFSF), 653-673 (VYLVKPNYVSFGYIFLLLLWI), 694-714 (AVLVFMFIYCLSSFVSLQLWL), 730-750 (APLLDNVWESLAVLIVMQLYS), 792-812 (FYASLSPISVFGFVYLLGLVI), and 826-846 (SFLIYTGFLVSAEYLFQLWGM). Residues 927–947 (ASVSSSNGENPSSTDHASISM) form a disordered region. Positions 928-939 (SVSSSNGENPSS) are enriched in low complexity. 8 consecutive transmembrane segments (helical) span residues 1027–1047 (FWIENMFNLYGLEINMIALLL), 1050–1070 (FALLNAISMVYIALLAACVLL), 1078–1098 (LWPVVVFLFASILAIEYVATW), 1143–1160 (TLISYFVVFMLACFKLRA), 1204–1224 (LYCYVHLLDVVLILILITGTL), 1228–1248 (ILHLGYLAFALVFARMRLEIL), 1260–1280 (VYNFVLIIFSLAYQSPFVGNF), and 1310–1330 (SALVEIIIFMLVSLQSYMFSS). Residues 1347-1400 (AIVREQEKKAARKTEQLQQIREAEEKKRQRNLQVEKMKSEMLNLRVQLHRMNSD) are a coiled coil. Residues 1543–1583 (SDTNEQSSVDDEVYDEMESQKRKHTPFERSTSLQSDRSSDG) are disordered. A compositionally biased stretch (acidic residues) spans 1550–1559 (SVDDEVYDEM). The segment covering 1570–1583 (ERSTSLQSDRSSDG) has biased composition (polar residues). Transmembrane regions (helical) follow at residues 1611–1631 (FIIAFLWNFSLLSMVYLAALF), 1647–1667 (VIMLMYTEIYILLQYLYQIII), 1916–1936 (YIFGADLIVFFLVAIFYQSVI), 1956–1976 (FVIILMVIFFLIVVDRVIYLC), 1984–2004 (VYYLFSLILFTYAVTEYAWSI), 2012–2032 (AGLALRIIFLAKAMSLALQAI), 2130–2150 (GICLFFILLCVIWAPMLMYSS), and 2369–2389 (FLGDTLSKFSIWGLYITFVLA).

It belongs to the PIEZO (TC 1.A.75) family.

It localises to the membrane. Pore-forming subunit of a mechanosensitive non-specific cation channel, that conducts both sodium and potassium ions. This Arabidopsis thaliana (Mouse-ear cress) protein is Piezo-type mechanosensitive ion channel homolog.